Here is a 470-residue protein sequence, read N- to C-terminus: 6-phospho-beta-galactosidase (470 aa).

Q19, H116, N159, E160, and N297 together coordinate D-galactose 6-phosphate. E160 functions as the Proton donor in the catalytic mechanism. The active-site Nucleophile is the E375. Residues S430, W431, K437, and Y439 each coordinate D-galactose 6-phosphate.

This sequence belongs to the glycosyl hydrolase 1 family.

The catalysed reaction is a 6-phospho-beta-D-galactoside + H2O = D-galactose 6-phosphate + an alcohol. The protein operates within carbohydrate metabolism; lactose degradation; D-galactose 6-phosphate and beta-D-glucose from lactose 6-phosphate: step 1/1. The sequence is that of 6-phospho-beta-galactosidase from Staphylococcus epidermidis (strain ATCC 35984 / DSM 28319 / BCRC 17069 / CCUG 31568 / BM 3577 / RP62A).